The chain runs to 440 residues: Transposon Ty1-DR2 Gag polyprotein (440 aa).

Polar residues-rich tracts occupy residues 1–31 (MESQ…TTQD) and 137–168 (VGTH…TNQH). 3 disordered regions span residues 1-75 (MESQ…PQAA), 137-174 (VGTH…PPPI), and 350-440 (QQES…PGTY). An RNA-binding region spans residues 299-401 (NNGIPINNKV…NSQSRTARAH (103 aa)). Positions 363–372 (SPSDEKKDSR) are enriched in basic and acidic residues. A compositionally biased stretch (polar residues) spans 373 to 409 (TYTNTTKPKSITRNSQKPNNSQSRTARAHNVSTSNNF). Residues 429–440 (NKHDLHLRPGTY) are compositionally biased toward basic and acidic residues.

As to quaternary structure, homotrimer.

The protein localises to the cytoplasm. Its function is as follows. Capsid protein (CA) is the structural component of the virus-like particle (VLP), forming the shell that encapsulates the retrotransposons dimeric RNA genome. The particles are assembled from trimer-clustered units and there are holes in the capsid shells that allow for the diffusion of macromolecules. CA also has nucleocapsid-like chaperone activity, promoting primer tRNA(i)-Met annealing to the multipartite primer-binding site (PBS), dimerization of Ty1 RNA and initiation of reverse transcription. The polypeptide is Transposon Ty1-DR2 Gag polyprotein (TY1A-DR2) (Saccharomyces cerevisiae (strain ATCC 204508 / S288c) (Baker's yeast)).